The following is a 97-amino-acid chain: Small ribosomal subunit protein bS16c (97 aa).

This sequence belongs to the bacterial ribosomal protein bS16 family.

It is found in the plastid. The protein resides in the chloroplast. The chain is Small ribosomal subunit protein bS16c from Piper cenocladum (Ant piper).